A 333-amino-acid chain; its full sequence is Acyl-CoA wax alcohol acyltransferase 2 (333 aa).

3 helical membrane-spanning segments follow: residues 15–35 (VFALFQWALSALVIVTTVIIV), 38–58 (YLVVFTSYWPVTVLMLTWLAF), and 130–150 (TFPGITPYMLTLGAFFWVPFL).

Belongs to the diacylglycerol acyltransferase family. As to quaternary structure, monomer. In terms of tissue distribution, expressed in Mueller cells of the retina (at protein level). Abundant in tissues rich in sebaceous glands such as the preputial gland and eyelid.

The protein localises to the endoplasmic reticulum membrane. It carries out the reaction a long chain fatty alcohol + a fatty acyl-CoA = a wax ester + CoA. It catalyses the reaction all-trans-retinol + an acyl-CoA = an all-trans-retinyl ester + CoA. The enzyme catalyses an acyl-CoA + a 1,2-diacyl-sn-glycerol = a triacyl-sn-glycerol + CoA. The catalysed reaction is 9-cis-retinol + a fatty acyl-CoA = 9-cis-retinyl ester + CoA. It carries out the reaction 11-cis-retinol + a fatty acyl-CoA = 11-cis-retinyl ester + CoA. It catalyses the reaction 13-cis-retinol + a fatty acyl-CoA = 13-cis-retinyl ester + CoA. The enzyme catalyses a 1-acylglycerol + an acyl-CoA = a 1,2-diacylglycerol + CoA. The catalysed reaction is 1-O-alkylglycerol + an acyl-CoA = 1-O-alkyl-3-acylglycerol + CoA. It carries out the reaction a 2-acylglycerol + an acyl-CoA = a 1,2-diacyl-sn-glycerol + CoA. It catalyses the reaction 2-(9Z-octadecenoyl)-glycerol + hexadecanoyl-CoA = 1-hexadecanoyl-2-(9Z-octadecenoyl)-sn-glycerol + CoA. The enzyme catalyses 1,2-di-(9Z-octadecenoyl)-sn-glycerol + hexadecanoyl-CoA = 1,2-di-(9Z)-octadecenoyl-3-hexadecanoyl-sn-glycerol + CoA. The catalysed reaction is hexadecan-1-ol + hexadecanoyl-CoA = hexadecanyl hexadecanoate + CoA. It carries out the reaction hexadecane-1,2-diol + hexadecanoyl-CoA = 2-hydroxyhexadecyl hexadecanoate + CoA. It catalyses the reaction all-trans-retinol + hexadecanoyl-CoA = all-trans-retinyl hexadecanoate + CoA. The enzyme catalyses 1,2-di-(9Z-octadecenoyl)-sn-glycerol + (9Z)-octadecenoyl-CoA = 1,2,3-tri-(9Z-octadecenoyl)-glycerol + CoA. The catalysed reaction is hexadecan-1-ol + (9Z)-octadecenoyl-CoA = hexadecanyl (9Z)-octadecenoate + CoA. It carries out the reaction (9Z)-hexadecen-1-ol + (9Z)-octadecenoyl-CoA = 1-O-(9Z)-hexadecenyl (9Z)-octadecenoate + CoA. It catalyses the reaction octadecan-1-ol + (9Z)-octadecenoyl-CoA = 1-O-octadecyl (9Z)-octadecenoate + CoA. The enzyme catalyses (9Z)-octadecen-1-ol + (9Z)-octadecenoyl-CoA = 1-O-(9Z)-octadecenyl (9Z)-octadecenoate + CoA. The catalysed reaction is hexadecan-1-ol + (9Z)-hexadecenoyl-CoA = 1-O-hexadecyl (9Z)-hexadecenoate + CoA. It carries out the reaction hexadecan-1-ol + octadecanoyl-CoA = hexadecanyl octadecanoate + CoA. It catalyses the reaction 11-cis-retinol + hexadecanoyl-CoA = 11-cis-retinyl hexadecanoate + CoA. The enzyme catalyses 1-O-(9Z-octadecenyl)-glycerol + (9Z)-octadecenoyl-CoA = 1-O-(9Z-octadecyl)-3-(9Z-octadecenoyl)-glycerol + CoA. The catalysed reaction is 1-(9Z-octadecenoyl)-glycerol + (9Z)-octadecenoyl-CoA = 1,2-di-(9Z-octadecenoyl)-glycerol + CoA. It carries out the reaction 11-cis-retinol + tetradecanoyl-CoA = 11-cis-retinyl tetradecanoate + CoA. It catalyses the reaction 9-cis-retinol + tetradecanoyl-CoA = 9-cis-retinyl tetradecanoate + CoA. The enzyme catalyses 9-cis-retinol + hexadecanoyl-CoA = 9-cis-retinyl hexadecanoate + CoA. The catalysed reaction is 13-cis-retinol + tetradecanoyl-CoA = 13-cis-retinyl tetradecanoate + CoA. It carries out the reaction all-trans-retinol + tetradecanoyl-CoA = all-trans-retinyl tetradecanoate + CoA. It catalyses the reaction tetradecan-1-ol + tetradecanoyl-CoA = tetradecanyl tetradecanoate + CoA. Its activity is regulated as follows. 11-cis retinoids act as allosteric modulators of acyl-CoA retinol O-fatty-acyltransferase (ARAT) activity by suppressing esterification of 9-cis, 13-cis, or all-trans retinols concurrently increasing the enzyme specificity toward 11-cis isomer. Its function is as follows. Acyltransferase that catalyzes the formation of ester bonds between fatty alcohols and fatty acyl-CoAs to form wax monoesters. Shows a preference for medium chain acyl-CoAs from C12 to C16 in length and fatty alcohols shorter than C20, as the acyl donor and acceptor, respectively. Also possesses fatty acyl-CoA retinol acyltransferase (ARAT) activity that preferentially esterifies 11-cis-retinol, a chromophore precursor of bleached opsin pigments in cone cells. Shows higher catalytic efficiency toward 11-cis-retinol versus 9-cis-retinol, 13- cis-retinol and all-trans-retinol substrates. This chain is Acyl-CoA wax alcohol acyltransferase 2 (Awat2), found in Mus musculus (Mouse).